Reading from the N-terminus, the 317-residue chain is Acetyl-coenzyme A carboxylase carboxyl transferase subunit alpha (317 aa).

One can recognise a CoA carboxyltransferase C-terminal domain in the interval leucine 40–glutamate 293.

Belongs to the AccA family. As to quaternary structure, acetyl-CoA carboxylase is a heterohexamer composed of biotin carboxyl carrier protein (AccB), biotin carboxylase (AccC) and two subunits each of ACCase subunit alpha (AccA) and ACCase subunit beta (AccD).

It localises to the cytoplasm. It carries out the reaction N(6)-carboxybiotinyl-L-lysyl-[protein] + acetyl-CoA = N(6)-biotinyl-L-lysyl-[protein] + malonyl-CoA. It participates in lipid metabolism; malonyl-CoA biosynthesis; malonyl-CoA from acetyl-CoA: step 1/1. Functionally, component of the acetyl coenzyme A carboxylase (ACC) complex. First, biotin carboxylase catalyzes the carboxylation of biotin on its carrier protein (BCCP) and then the CO(2) group is transferred by the carboxyltransferase to acetyl-CoA to form malonyl-CoA. The chain is Acetyl-coenzyme A carboxylase carboxyl transferase subunit alpha from Rhizobium johnstonii (strain DSM 114642 / LMG 32736 / 3841) (Rhizobium leguminosarum bv. viciae).